A 421-amino-acid polypeptide reads, in one-letter code: Acyl-coenzyme A thioesterase 5 (421 aa).

Catalysis depends on charge relay system residues Ser-232, Asp-326, and His-360. The Microbody targeting signal motif lies at 419–421 (AKL).

The protein belongs to the C/M/P thioester hydrolase family. Highly expressed in spleen, brain, testis and proximal and distal intestine; expressed at low level in the liver.

Its subcellular location is the peroxisome. The enzyme catalyses hexadecanoyl-CoA + H2O = hexadecanoate + CoA + H(+). It catalyses the reaction decanoyl-CoA + H2O = decanoate + CoA + H(+). The catalysed reaction is octanoyl-CoA + H2O = octanoate + CoA + H(+). It carries out the reaction dodecanoyl-CoA + H2O = dodecanoate + CoA + H(+). The enzyme catalyses tetradecanoyl-CoA + H2O = tetradecanoate + CoA + H(+). It catalyses the reaction octadecanoyl-CoA + H2O = octadecanoate + CoA + H(+). The catalysed reaction is eicosanoyl-CoA + H2O = eicosanoate + CoA + H(+). It carries out the reaction (9Z)-octadecenoyl-CoA + H2O = (9Z)-octadecenoate + CoA + H(+). The enzyme catalyses (9Z,12Z)-octadecadienoyl-CoA + H2O = (9Z,12Z)-octadecadienoate + CoA + H(+). It catalyses the reaction (5Z,8Z,11Z,14Z)-eicosatetraenoyl-CoA + H2O = (5Z,8Z,11Z,14Z)-eicosatetraenoate + CoA + H(+). The catalysed reaction is (9Z)-hexadecenoyl-CoA + H2O = (9Z)-hexadecenoate + CoA + H(+). It functions in the pathway lipid metabolism; fatty acid metabolism. Catalyzes the hydrolysis of acyl-CoAs into free fatty acids and coenzyme A (CoASH), regulating their respective intracellular levels. Mainly active on medium-chain acyl-CoAs. Seems to be involved in intraperoxisomal regulation of acyl-CoA levels, but not CoASH levels. May have a function in termination of beta-oxidation of fatty acids. This is Acyl-coenzyme A thioesterase 5 (Acot5) from Mus musculus (Mouse).